Reading from the N-terminus, the 351-residue chain is Molybdenum import ATP-binding protein ModC (351 aa).

Residues 1–229 (MLKINVKKQL…PLFLPWKLED (229 aa)) enclose the ABC transporter domain. 31-38 (GLSGSGKT) lines the ATP pocket. A Mop domain is found at 289–351 (KTSIRNILHG…FAQIKAVSVL (63 aa)).

It belongs to the ABC transporter superfamily. Molybdate importer (TC 3.A.1.8) family. As to quaternary structure, the complex is composed of two ATP-binding proteins (ModC), two transmembrane proteins (ModB) and a solute-binding protein (ModA).

The protein resides in the cell inner membrane. The catalysed reaction is molybdate(out) + ATP + H2O = molybdate(in) + ADP + phosphate + H(+). Its function is as follows. Part of the ABC transporter complex ModABC involved in molybdenum import. Responsible for energy coupling to the transport system. This is Molybdenum import ATP-binding protein ModC from Pasteurella multocida (strain Pm70).